A 315-amino-acid polypeptide reads, in one-letter code: Solute carrier family 25 member 32 (315 aa).

Solcar repeat units follow at residues 20-109, 118-209, and 222-306; these read HVRY…IKSY, LEAT…LKLK, and LSTV…VSHF. 6 consecutive transmembrane segments (helical) span residues 26 to 43, 89 to 106, 123 to 143, 186 to 203, 227 to 243, and 281 to 300; these read LIAG…LHPL, IWGA…YNAI, YLVS…PLWV, FVPG…FMAY, YISV…AATY, and GIAP…FVVY.

The protein belongs to the mitochondrial carrier (TC 2.A.29) family. Ubiquitous.

The protein resides in the mitochondrion inner membrane. The catalysed reaction is FAD(in) = FAD(out). In terms of biological role, facilitates flavin adenine dinucleotide (FAD) translocation across the mitochondrial inner membrane into the mitochondrial matrix where it acts as a redox cofactor to assist flavoenzyme activities in fundamental metabolic processes including fatty acid beta-oxidation, amino acid and choline metabolism as well as mitochondrial electron transportation. In particular, provides FAD to DLD dehydrogenase of the glycine cleavage system, part of mitochondrial one-carbon metabolic pathway involved in neural tube closure in early embryogenesis. The protein is Solute carrier family 25 member 32 of Homo sapiens (Human).